The chain runs to 347 residues: S-adenosylmethionine decarboxylase proenzyme (347 aa).

Residues Glu10 and Glu13 contribute to the active site. Ser66 functions as the Schiff-base intermediate with substrate; via pyruvic acid in the catalytic mechanism. Ser66 bears the Pyruvic acid (Ser); by autocatalysis mark. Residue Cys80 is the Proton donor; for catalytic activity of the active site. Active-site proton acceptor; for processing activity residues include Ser237 and His251.

It belongs to the eukaryotic AdoMetDC family. Requires pyruvate as cofactor. In terms of processing, is synthesized initially as an inactive proenzyme. Formation of the active enzyme involves a self-maturation process in which the active site pyruvoyl group is generated from an internal serine residue via an autocatalytic post-translational modification. Two non-identical subunits are generated from the proenzyme in this reaction, and the pyruvate is formed at the N-terminus of the alpha chain, which is derived from the carboxyl end of the proenzyme. The post-translation cleavage follows an unusual pathway, termed non-hydrolytic serinolysis, in which the side chain hydroxyl group of the serine supplies its oxygen atom to form the C-terminus of the beta chain, while the remainder of the serine residue undergoes an oxidative deamination to produce ammonia and the pyruvoyl group blocking the N-terminus of the alpha chain.

The enzyme catalyses S-adenosyl-L-methionine + H(+) = S-adenosyl 3-(methylsulfanyl)propylamine + CO2. It functions in the pathway amine and polyamine biosynthesis; S-adenosylmethioninamine biosynthesis; S-adenosylmethioninamine from S-adenosyl-L-methionine: step 1/1. The sequence is that of S-adenosylmethionine decarboxylase proenzyme (SamDC) from Drosophila melanogaster (Fruit fly).